A 661-amino-acid polypeptide reads, in one-letter code: MNPYGPSRVPEGEVYRPDRLNRKATLVAIVGAAILAFAFALVLWMGLKQTNLPAFGPSNVTRAVASATIAAVLIVTGFLTWLWLRDEHQSNPRWELEDVKPRPKWRTALTYLASYLSPAALVVAVLAIPLSATRLYLDGISVDQGFRTQFLTRMADDIGLSDMNYIDMPTFYPAGWFWLGGRLANLLGLPGWEAFQPWAIVSMAVAASVLVPVWQRITGSLPVATGIALVTTCIILAMNSEEPYAAIVAMGIPAMLVLASRIAKGDKFALAGGIIYLGVSATFYTLFTGAIALSAVAVCIVVAAIVQRSIKPLLWLAVLGGGSIVIALISWGPYLLASINGAERSGDSATHYLPLEGTQFPVPFLASSVVGLLCLVGLIYLVVRFHNNEVRAMWVGIAVFYAWMGMSMAITLLGNTLLGFRLDTVLVLIFATAGVLGIADFRLASVYQLYPTQITERTATHLTNLIVVLVLLGGLYYAQDLPQKNARAIDLAYTDTDGYGERADLYPAGAARYYKDINDHLLDQGFEPSETVVLTDELDFMSYYPYRGYQAFTSHYANPLGEFGNRNAFIEDLAIRSWDELADPQQFSDALNTSPWTIPEVFIFRGSIDDPDAGWKYDVAEDLYPNNPNVRFRGVYFNPESFDQMWQTKQVGPFVVVTHNE.

The next 13 membrane-spanning stretches (helical) occupy residues 26 to 46 (LVAIVGAAILAFAFALVLWMG), 64 to 84 (VASATIAAVLIVTGFLTWLWL), 108 to 128 (ALTYLASYLSPAALVVAVLAI), 194 to 214 (AFQPWAIVSMAVAASVLVPVW), 217 to 237 (ITGSLPVATGIALVTTCIILA), 243 to 263 (PYAAIVAMGIPAMLVLASRIA), 265 to 285 (GDKFALAGGIIYLGVSATFYT), 286 to 306 (LFTGAIALSAVAVCIVVAAIV), 312 to 332 (PLLWLAVLGGGSIVIALISWG), 362 to 382 (VPFLASSVVGLLCLVGLIYLV), 393 to 413 (MWVGIAVFYAWMGMSMAITLL), 418 to 438 (LGFRLDTVLVLIFATAGVLGI), and 458 to 478 (TATHLTNLIVVLVLLGGLYYA).

The protein belongs to the glycosyltransferase 85 family.

Its subcellular location is the cell membrane. The catalysed reaction is Adds an alpha-D-arabinofuranosyl group from trans,octacis-decaprenylphospho-beta-D-arabinofuranose at the 5-O-position of the eighth, tenth and twelfth galactofuranose unit of the galactofuranan chain of [beta-D-galactofuranosyl-(1-&gt;5)-beta-D-galactofuranosyl-(1-&gt;6)]14-beta-D-galactofuranosyl-(1-&gt;5)-beta-D-galactofuranosyl-(1-&gt;4)-alpha-L-rhamnopyranosyl-(1-&gt;3)-N-acetyl-alpha-D-glucosaminyl-diphospho-trans,octacis-decaprenol.. Its pathway is cell wall biogenesis; cell wall polysaccharide biosynthesis. In terms of biological role, involved in the biosynthesis of the arabinogalactan (AG) region of the mycolylarabinogalactan-peptidoglycan (mAGP) complex, an essential component of the cell wall. Catalyzes the addition of the first key arabinofuranosyl (Araf) residue from the sugar donor decaprenyl-phospho-arabinose (DPA) on the C-5 of a 6-linked galactofuranosyl (Galf) of the galactan domain, thus 'priming' the galactan for further elaboration by other arabinofuranosyltransferases. This Corynebacterium glutamicum (strain ATCC 13032 / DSM 20300 / JCM 1318 / BCRC 11384 / CCUG 27702 / LMG 3730 / NBRC 12168 / NCIMB 10025 / NRRL B-2784 / 534) protein is Galactan 5-O-arabinofuranosyltransferase.